The chain runs to 201 residues: Recombination protein RecR (201 aa).

A C4-type zinc finger spans residues Cys-60–Cys-75. The 96-residue stretch at Ser-83 to Pro-178 folds into the Toprim domain.

It belongs to the RecR family.

Its function is as follows. May play a role in DNA repair. It seems to be involved in an RecBC-independent recombinational process of DNA repair. It may act with RecF and RecO. The polypeptide is Recombination protein RecR (Nitrobacter winogradskyi (strain ATCC 25391 / DSM 10237 / CIP 104748 / NCIMB 11846 / Nb-255)).